The primary structure comprises 154 residues: Cyanate hydratase (154 aa).

Catalysis depends on residues Arg-100, Glu-103, and Ser-126.

The protein belongs to the cyanase family.

The enzyme catalyses cyanate + hydrogencarbonate + 3 H(+) = NH4(+) + 2 CO2. Functionally, catalyzes the reaction of cyanate with bicarbonate to produce ammonia and carbon dioxide. This chain is Cyanate hydratase, found in Aspergillus terreus (strain NIH 2624 / FGSC A1156).